A 229-amino-acid chain; its full sequence is Ribonuclease 3 (229 aa).

Positions 5–127 constitute an RNase III domain; that stretch reads LSRLERQLGY…LIGAIYLDAG (123 aa). E40 is a Mg(2+) binding site. D44 is a catalytic residue. Mg(2+)-binding residues include D113 and E116. E116 is a catalytic residue. One can recognise a DRBM domain in the interval 154–224; sequence DPKTRLQEFL…AAAALIALGV (71 aa).

It belongs to the ribonuclease III family. Homodimer. It depends on Mg(2+) as a cofactor.

Its subcellular location is the cytoplasm. The catalysed reaction is Endonucleolytic cleavage to 5'-phosphomonoester.. Functionally, digests double-stranded RNA. Involved in the processing of primary rRNA transcript to yield the immediate precursors to the large and small rRNAs (23S and 16S). Processes some mRNAs, and tRNAs when they are encoded in the rRNA operon. Processes pre-crRNA and tracrRNA of type II CRISPR loci if present in the organism. The protein is Ribonuclease 3 of Pseudomonas fluorescens (strain ATCC BAA-477 / NRRL B-23932 / Pf-5).